We begin with the raw amino-acid sequence, 215 residues long: Chaperone protein TorD (215 aa).

The protein belongs to the TorD/DmsD family. TorD subfamily.

It localises to the cytoplasm. In terms of biological role, involved in the biogenesis of TorA. Acts on TorA before the insertion of the molybdenum cofactor and, as a result, probably favors a conformation of the apoenzyme that is competent for acquiring the cofactor. This is Chaperone protein TorD from Shewanella piezotolerans (strain WP3 / JCM 13877).